The primary structure comprises 219 residues: 7-cyano-7-deazaguanine synthase (219 aa).

Residue 9–19 (YSGGMDSFTVL) coordinates ATP. The Zn(2+) site is built by cysteine 185, cysteine 193, cysteine 196, and cysteine 199.

This sequence belongs to the QueC family. Requires Zn(2+) as cofactor.

It catalyses the reaction 7-carboxy-7-deazaguanine + NH4(+) + ATP = 7-cyano-7-deazaguanine + ADP + phosphate + H2O + H(+). The protein operates within purine metabolism; 7-cyano-7-deazaguanine biosynthesis. Its function is as follows. Catalyzes the ATP-dependent conversion of 7-carboxy-7-deazaguanine (CDG) to 7-cyano-7-deazaguanine (preQ(0)). This Marinomonas sp. (strain MWYL1) protein is 7-cyano-7-deazaguanine synthase.